A 324-amino-acid chain; its full sequence is D-alanine--D-alanine ligase (324 aa).

Residues 121 to 321 (NQYLKGFGIR…IKDVMTDIIE (201 aa)) enclose the ATP-grasp domain. 149–204 (INKIGLPCFIKPNAGGSSFGVTKVKTKEDIQPAIEKAFEESDEVMIEAFMKGTEIT) serves as a coordination point for ATP. Positions 275, 288, and 290 each coordinate Mg(2+).

Belongs to the D-alanine--D-alanine ligase family. It depends on Mg(2+) as a cofactor. Mn(2+) is required as a cofactor.

It is found in the cytoplasm. The enzyme catalyses 2 D-alanine + ATP = D-alanyl-D-alanine + ADP + phosphate + H(+). Its pathway is cell wall biogenesis; peptidoglycan biosynthesis. Cell wall formation. The polypeptide is D-alanine--D-alanine ligase (Phocaeicola vulgatus (strain ATCC 8482 / DSM 1447 / JCM 5826 / CCUG 4940 / NBRC 14291 / NCTC 11154) (Bacteroides vulgatus)).